The following is a 369-amino-acid chain: MNNHSETESSGHNSVHGNNDNIPGWNEELELAFSAYKGLYLAGRISSRHKTVCEVLVPGAVVQAGISGALQRIGKQPVVGDFVVLLDQPETGSRMVVNILPRRTCLSRGAAGDGGGEQLIAANLDTIFIVTSVGKDLNLRRLERYLAIVYSSGASPVILLNKIDLADDPARLVEKIRDVTGDVPVIPLSALSKTGLDALGPYLNPGETVALVGSSGVGKSTLINAFLGETVQKTADIRKDDEKGRHTTTVRQMFLLPNGAVLIDNPGIREIQLGDSAEGLEKAFSEIVDAARNCKFKDCTHRNEPGCAVLQAVRDGIIPEERLESYHRLTDELSFQSKKAEIGLKRLEKERYREMAVNIKKYRKFTGKP.

The CP-type G domain occupies 116-271; that stretch reads GEQLIAANLD…LIDNPGIREI (156 aa). GTP-binding positions include 161–164 and 213–221; these read NKID and GSSGVGKST. Positions 294, 299, 301, and 307 each coordinate Zn(2+).

This sequence belongs to the TRAFAC class YlqF/YawG GTPase family. RsgA subfamily. As to quaternary structure, monomer. Associates with 30S ribosomal subunit, binds 16S rRNA. Zn(2+) serves as cofactor.

It localises to the cytoplasm. Its function is as follows. One of several proteins that assist in the late maturation steps of the functional core of the 30S ribosomal subunit. Helps release RbfA from mature subunits. May play a role in the assembly of ribosomal proteins into the subunit. Circularly permuted GTPase that catalyzes slow GTP hydrolysis, GTPase activity is stimulated by the 30S ribosomal subunit. This Methanosarcina acetivorans (strain ATCC 35395 / DSM 2834 / JCM 12185 / C2A) protein is Small ribosomal subunit biogenesis GTPase RsgA.